Consider the following 235-residue polypeptide: Protein LIFEGUARD 1 (235 aa).

7 helical membrane-spanning segments follow: residues 33–53, 67–87, 95–115, 120–140, 149–169, 178–198, and 212–232; these read YSILSLQLLVTVGVSAVVYFV, LAVFFVILLLPLLLLWPLLAF, CIVLSIFTLSISFSVGICCSL, IVLEAAILTAVMVFGLTIYTF, FSFLGPFLFGALLIILVFTLL, LSSMIFSGIASIVFCGYIIFD, and ITAAIRLYLDVMNLFLSLLGI.

Belongs to the BI1 family. In terms of tissue distribution, expressed at very low in leaves.

It localises to the membrane. Functionally, (Microbial infection) Facilitates the development of the powdery mildew fungus E.cruciferarum. In terms of biological role, (Microbial infection) May prevent cell death upon A.alternata f.sp. lycopersici (AAL) toxin treatment. This chain is Protein LIFEGUARD 1, found in Arabidopsis thaliana (Mouse-ear cress).